The sequence spans 963 residues: Phosphoenolpyruvate carboxylase (963 aa).

At Ser11 the chain carries Phosphoserine. Catalysis depends on residues His172 and Lys600.

It belongs to the PEPCase type 1 family. As to quaternary structure, homotetramer. It depends on Mg(2+) as a cofactor.

The protein localises to the cytoplasm. The enzyme catalyses oxaloacetate + phosphate = phosphoenolpyruvate + hydrogencarbonate. Its activity is regulated as follows. By light-reversible phosphorylation. Through the carboxylation of phosphoenolpyruvate (PEP) it forms oxaloacetate, a four-carbon dicarboxylic acid source for the tricarboxylic acid cycle. The polypeptide is Phosphoenolpyruvate carboxylase (PPC) (Picea abies (Norway spruce)).